The chain runs to 586 residues: Heterogeneous nuclear ribonucleoprotein L (586 aa).

Positions 1 to 16 (MSRRLLPRAEKRRRRL) are enriched in basic residues. The tract at residues 1 to 97 (MSRRLLPRAE…NYDDPHKTPA (97 aa)) is disordered. The span at 17-27 (EQRQQPDEQLR) shows a compositional bias: basic and acidic residues. The span at 28–37 (RAGAMVKMAA) shows a compositional bias: low complexity. Gly residues predominate over residues 38-54 (AGGGGGGGRYYGGGNEG). Residues Lys59 and Lys62 each participate in a glycyl lysine isopeptide (Lys-Gly) (interchain with G-Cter in SUMO2) cross-link. A compositionally biased stretch (gly residues) spans 69 to 87 (QHGGGGGGGSGAAGGGGGE). Residue Ser98 is modified to Phosphoserine. Positions 99–173 (PVVHIRGLID…HPAFVNYSTS (75 aa)) constitute an RRM 1 domain. Residue Lys133 forms a Glycyl lysine isopeptide (Lys-Gly) (interchain with G-Cter in SUMO2) linkage. Ser182 is subject to Phosphoserine. Positions 190–267 (SVLLFTILNP…CTLKIEYAKP (78 aa)) constitute an RRM 2 domain. Lys266 is subject to N6-acetyllysine. The span at 281-298 (DYTNPNLSGQGDPGSNPN) shows a compositional bias: polar residues. Residues 281–376 (DYTNPNLSGQ…PPPPDYGPHA (96 aa)) form a disordered region. Phosphoserine is present on residues Ser288 and Ser295. Lys299 is covalently cross-linked (Glycyl lysine isopeptide (Lys-Gly) (interchain with G-Cter in SUMO2)). An asymmetric dimethylarginine mark is found at Arg351 and Arg355. Residues 361-372 (GHPPPPPPPPDY) show a composition bias toward pro residues. Ser378 carries the post-translational modification Phosphoserine. 2 consecutive RRM domains span residues 379–476 (PVLM…DFSE) and 492–580 (RIQH…LCFS). Ser541 is subject to Phosphoserine; by CaMK4. Residue Lys565 forms a Glycyl lysine isopeptide (Lys-Gly) (interchain with G-Cter in SUMO2) linkage.

As to quaternary structure, identified in a IGF2BP1-dependent mRNP granule complex containing untranslated mRNAs. Interacts with HNRNPLL. Interacts with APEX1; the interaction is DNA-dependent. Component of a complex with SETD2. Interacts with ELAVL1. Part of a transcription inhibitory ribonucleoprotein complex composed at least of the circular RNA circZNF827, ZNF827 and HNRNPK. Interacts with CHD8 in an RNA-dependent manner. Post-translationally, phosphorylation at Ser-541 by CaMK4 enhances interaction with a CaMK4-responsive RNA element (CaRRE1), and prevents inclusion of the stress axis-regulated exon (STREX) of the KCNMA1 potassium channel transcripts upon membrane depolarization. In terms of tissue distribution, detected in hematopoietic cells, including lymphoid progenitor cells.

The protein resides in the nucleus. The protein localises to the nucleoplasm. Its subcellular location is the cytoplasm. Its function is as follows. Splicing factor binding to exonic or intronic sites and acting as either an activator or repressor of exon inclusion. Exhibits a binding preference for CA-rich elements. Component of the heterogeneous nuclear ribonucleoprotein (hnRNP) complexes and associated with most nascent transcripts. Associates, together with APEX1, to the negative calcium responsive element (nCaRE) B2 of the APEX2 promoter. As part of a ribonucleoprotein complex composed at least of ZNF827, HNRNPK and the circular RNA circZNF827 that nucleates the complex on chromatin, may negatively regulate the transcription of genes involved in neuronal differentiation. Regulates alternative splicing of a core group of genes involved in neuronal differentiation, likely by mediating H3K36me3-coupled transcription elongation and co-transcriptional RNA processing via interaction with CHD8. This Mus musculus (Mouse) protein is Heterogeneous nuclear ribonucleoprotein L (Hnrnpl).